Consider the following 334-residue polypeptide: Glycerol-3-phosphate dehydrogenase [NAD(P)+] (334 aa).

Residues Ser-14, Tyr-15, His-35, and Lys-109 each coordinate NADPH. Lys-109, Gly-138, and Thr-140 together coordinate sn-glycerol 3-phosphate. Residue Ala-142 coordinates NADPH. Residues Lys-194, Asp-247, Ser-257, Arg-258, and Asn-259 each coordinate sn-glycerol 3-phosphate. Residue Lys-194 is the Proton acceptor of the active site. Arg-258 contributes to the NADPH binding site. The NADPH site is built by Val-282 and Glu-284.

It belongs to the NAD-dependent glycerol-3-phosphate dehydrogenase family.

It localises to the cytoplasm. The enzyme catalyses sn-glycerol 3-phosphate + NAD(+) = dihydroxyacetone phosphate + NADH + H(+). The catalysed reaction is sn-glycerol 3-phosphate + NADP(+) = dihydroxyacetone phosphate + NADPH + H(+). It participates in membrane lipid metabolism; glycerophospholipid metabolism. Functionally, catalyzes the reduction of the glycolytic intermediate dihydroxyacetone phosphate (DHAP) to sn-glycerol 3-phosphate (G3P), the key precursor for phospholipid synthesis. The protein is Glycerol-3-phosphate dehydrogenase [NAD(P)+] of Tolumonas auensis (strain DSM 9187 / NBRC 110442 / TA 4).